The chain runs to 572 residues: Urease subunit alpha (572 aa).

Ni(2+) is bound by residues His139, His141, and Lys222. Lys222 carries the post-translational modification N6-carboxylysine. His224 contributes to the substrate binding site. 2 residues coordinate Ni(2+): His251 and His277. The Proton donor role is filled by His325. Asp365 serves as a coordination point for Ni(2+).

Belongs to the metallo-dependent hydrolases superfamily. Urease alpha subunit family. In terms of assembly, heterotrimer of UreA (gamma), UreB (beta) and UreC (alpha) subunits. Three heterotrimers associate to form the active enzyme. Ni cation serves as cofactor. Carboxylation allows a single lysine to coordinate two nickel ions.

It localises to the cytoplasm. It catalyses the reaction urea + 2 H2O + H(+) = hydrogencarbonate + 2 NH4(+). It functions in the pathway nitrogen metabolism; urea degradation; CO(2) and NH(3) from urea (urease route): step 1/1. This chain is Urease subunit alpha, found in Acetivibrio thermocellus (strain ATCC 27405 / DSM 1237 / JCM 9322 / NBRC 103400 / NCIMB 10682 / NRRL B-4536 / VPI 7372) (Clostridium thermocellum).